A 687-amino-acid chain; its full sequence is Putative pentatricopeptide repeat-containing protein At3g15930 (687 aa).

13 PPR repeats span residues 98–132, 133–168, 169–199, 200–234, 235–269, 270–304, 305–331, 332–366, 367–401, 402–432, 433–467, 468–498, and 504–534; these read DVVVWNNMIKGWSKVDCDGEGVRLYLNMLKEGVTP, DSHTFPFLLNGLKRDGGALACGKKLHCHVVKFGLGS, NLYVQNALVKMYSLCGLMDMARGVFDRRCKE, DVFSWNLMISGYNRMKEYEESIELLVEMERNLVSP, TSVTLLLVLSACSKVKDKDLCKRVHEYVSECKTEP, SLRLENALVNAYAACGEMDIAVRIFRSMKARDVIS, WTSIVKGYVERGNLKLARTYFDQMPVR, DRISWTIMIDGYLRAGCFNESLEIFREMQSAGMIP, DEFTMVSVLTACAHLGSLEIGEWIKTYIDKNKIKN, DVVVGNALIDMYFKCGCSEKAQKVFHDMDQR, DKFTWTAMVVGLANNGQGQEAIKVFFQMQDMSIQP, DDITYLGVLSACNHSGMVDQARKFFAKMRSD, and SLVHYGCMVDMLGRAGLVKEAYEILRKMPMN. Positions 539–614 are type E motif; the sequence is VWGALLGASR…TPGFSLIEVN (76 aa). Positions 615 to 645 are type E(+) motif; the sequence is GFAHEFVAGDKSHLQSEEIYMKLEELAQEST.

It belongs to the PPR family. PCMP-E subfamily.

The polypeptide is Putative pentatricopeptide repeat-containing protein At3g15930 (PCMP-E51) (Arabidopsis thaliana (Mouse-ear cress)).